The sequence spans 513 residues: Histidine ammonia-lyase (513 aa).

Residues A142–G144 constitute a cross-link (5-imidazolinone (Ala-Gly)). S143 carries the 2,3-didehydroalanine (Ser) modification.

This sequence belongs to the PAL/histidase family. In terms of processing, contains an active site 4-methylidene-imidazol-5-one (MIO), which is formed autocatalytically by cyclization and dehydration of residues Ala-Ser-Gly.

The protein resides in the cytoplasm. It carries out the reaction L-histidine = trans-urocanate + NH4(+). It functions in the pathway amino-acid degradation; L-histidine degradation into L-glutamate; N-formimidoyl-L-glutamate from L-histidine: step 1/3. This is Histidine ammonia-lyase from Mesorhizobium japonicum (strain LMG 29417 / CECT 9101 / MAFF 303099) (Mesorhizobium loti (strain MAFF 303099)).